A 176-amino-acid chain; its full sequence is Oleosin Ara h 14.0102 (176 aa).

Alanine 2 is subject to N-acetylalanine; alternate. The next 2 helical transmembrane spans lie at 61–81 and 87–107; these read GTLL…LAIA and FFSP…IGIL. Residues 156-176 form a disordered region; the sequence is KTKDAGQEIQTKAQDVKRSSS.

Belongs to the oleosin family. In terms of assembly, homodimer. Forms oligomers. Expressed in seeds (at protein level). Not expressed in leaves.

The protein resides in the lipid droplet. It localises to the membrane. Its function is as follows. May have a structural role to stabilize the lipid body during desiccation of the seed by preventing coalescence of the oil. Probably interacts with both lipid and phospholipid moieties of lipid bodies. May also provide recognition signals for specific lipase anchorage in lipolysis during seedling growth. This is Oleosin Ara h 14.0102 from Arachis hypogaea (Peanut).